A 125-amino-acid chain; its full sequence is Phosphoribosyl-AMP cyclohydrolase (125 aa).

Asp-74 provides a ligand contact to Mg(2+). Cys-75 is a binding site for Zn(2+). 2 residues coordinate Mg(2+): Asp-76 and Asp-78. Zn(2+)-binding residues include Cys-92 and Cys-99.

It belongs to the PRA-CH family. In terms of assembly, homodimer. It depends on Mg(2+) as a cofactor. Requires Zn(2+) as cofactor.

It localises to the cytoplasm. The enzyme catalyses 1-(5-phospho-beta-D-ribosyl)-5'-AMP + H2O = 1-(5-phospho-beta-D-ribosyl)-5-[(5-phospho-beta-D-ribosylamino)methylideneamino]imidazole-4-carboxamide. It functions in the pathway amino-acid biosynthesis; L-histidine biosynthesis; L-histidine from 5-phospho-alpha-D-ribose 1-diphosphate: step 3/9. In terms of biological role, catalyzes the hydrolysis of the adenine ring of phosphoribosyl-AMP. The polypeptide is Phosphoribosyl-AMP cyclohydrolase (Geobacter sp. (strain M21)).